A 260-amino-acid polypeptide reads, in one-letter code: ATP synthase subunit a (260 aa).

A run of 7 helical transmembrane segments spans residues Phe29–Ile49, Phe95–Ile115, His124–Phe144, Phe151–Leu171, Met191–Met211, Glu213–Leu233, and Val237–Ile257.

This sequence belongs to the ATPase A chain family. In terms of assembly, F-type ATPases have 2 components, CF(1) - the catalytic core - and CF(0) - the membrane proton channel. CF(1) has five subunits: alpha(3), beta(3), gamma(1), delta(1), epsilon(1). CF(0) has three main subunits: a, b and c.

It localises to the mitochondrion inner membrane. Mitochondrial membrane ATP synthase (F(1)F(0) ATP synthase or Complex V) produces ATP from ADP in the presence of a proton gradient across the membrane which is generated by electron transport complexes of the respiratory chain. F-type ATPases consist of two structural domains, F(1) - containing the extramembraneous catalytic core and F(0) - containing the membrane proton channel, linked together by a central stalk and a peripheral stalk. During catalysis, ATP synthesis in the catalytic domain of F(1) is coupled via a rotary mechanism of the central stalk subunits to proton translocation. Key component of the proton channel; it may play a direct role in the translocation of protons across the membrane. In Brassica napus (Rape), this protein is ATP synthase subunit a (ATP6).